Reading from the N-terminus, the 284-residue chain is Nucleotide-binding protein Teth39_0666 (284 aa).

Residue 8–15 (GLSGAGKT) coordinates ATP. 58–61 (DLRG) provides a ligand contact to GTP.

It belongs to the RapZ-like family.

In terms of biological role, displays ATPase and GTPase activities. This Thermoanaerobacter pseudethanolicus (strain ATCC 33223 / 39E) (Clostridium thermohydrosulfuricum) protein is Nucleotide-binding protein Teth39_0666.